Here is a 72-residue protein sequence, read N- to C-terminus: Translation initiation factor IF-1 2 (72 aa).

An S1-like domain is found at methionine 1–lysine 72.

Belongs to the IF-1 family. Component of the 30S ribosomal translation pre-initiation complex which assembles on the 30S ribosome in the order IF-2 and IF-3, IF-1 and N-formylmethionyl-tRNA(fMet); mRNA recruitment can occur at any time during PIC assembly.

Its subcellular location is the cytoplasm. One of the essential components for the initiation of protein synthesis. Stabilizes the binding of IF-2 and IF-3 on the 30S subunit to which N-formylmethionyl-tRNA(fMet) subsequently binds. Helps modulate mRNA selection, yielding the 30S pre-initiation complex (PIC). Upon addition of the 50S ribosomal subunit IF-1, IF-2 and IF-3 are released leaving the mature 70S translation initiation complex. This chain is Translation initiation factor IF-1 2, found in Cupriavidus necator (strain ATCC 17699 / DSM 428 / KCTC 22496 / NCIMB 10442 / H16 / Stanier 337) (Ralstonia eutropha).